The sequence spans 379 residues: Nematocin receptor 1 (379 aa).

Topologically, residues H19–M48 are extracellular. N32 carries an N-linked (GlcNAc...) asparagine glycan. A helical membrane pass occupies residues L49–I69. Residues Y70–D95 are Cytoplasmic-facing. The chain crosses the membrane as a helical span at residues I96–F116. The Extracellular portion of the chain corresponds to Y117–K124. A disulfide bridge links C123 with C196. Residues L125–S145 traverse the membrane as a helical segment. Residues A146 to A168 are Cytoplasmic-facing. A helical transmembrane segment spans residues L169–F189. Residues E190–Q207 are Extracellular-facing. Residue N199 is glycosylated (N-linked (GlcNAc...) asparagine). Residues L208 to L228 traverse the membrane as a helical segment. Topologically, residues Y229–L289 are cytoplasmic. Residues T290 to I310 form a helical membrane-spanning segment. Residues D311–S320 lie on the Extracellular side of the membrane. The N-linked (GlcNAc...) asparagine glycan is linked to N319. A helical transmembrane segment spans residues T321–H343. Topologically, residues F344–F379 are cytoplasmic.

The protein belongs to the G-protein coupled receptor 1 family. Vasopressin/oxytocin receptor subfamily. Detected in the left ASE gustatory neuron, the chemosensory neuron pairs ASH and ADF, and the PQR tail neuron. In males, detected in hook and tail sensory neurons involved in vulval sensing and hermaphrodite contact, and in spicule protractor muscles.

The protein localises to the cell membrane. Receptor for nematocin. The activity of this receptor is mediated by G proteins which activate a phosphatidylinositol-calcium second messenger system. The activity of this receptor may be modulated by ntr-2, leading to reduced intracellular cAMP production. Plays a role in gustatory associative learning. Also plays a role in male mating behavior. This chain is Nematocin receptor 1, found in Caenorhabditis elegans.